A 195-amino-acid polypeptide reads, in one-letter code: Protein SYM1 (195 aa).

The next 4 helical transmembrane spans lie at 17–39, 59–78, 99–121, and 168–190; these read LITN…QFFF, RAII…WYKF, STLL…PLYY, and PVQF…LSYV.

This sequence belongs to the peroxisomal membrane protein PXMP2/4 family.

The protein localises to the mitochondrion inner membrane. Functionally, may be involved in cellular response to stress. Required to maintain mitochondrial DNA (mtDNA) integrity and stability. This chain is Protein SYM1 (SYM1), found in Candida albicans (strain SC5314 / ATCC MYA-2876) (Yeast).